Reading from the N-terminus, the 192-residue chain is Peptidyl-tRNA hydrolase (192 aa).

His19 serves as the catalytic Proton acceptor. 3 residues coordinate tRNA: Tyr64, Asn66, and Asn112.

It belongs to the PTH family. Monomer.

It is found in the cytoplasm. It catalyses the reaction an N-acyl-L-alpha-aminoacyl-tRNA + H2O = an N-acyl-L-amino acid + a tRNA + H(+). Functionally, hydrolyzes ribosome-free peptidyl-tRNAs (with 1 or more amino acids incorporated), which drop off the ribosome during protein synthesis, or as a result of ribosome stalling. Catalyzes the release of premature peptidyl moieties from peptidyl-tRNA molecules trapped in stalled 50S ribosomal subunits, and thus maintains levels of free tRNAs and 50S ribosomes. This chain is Peptidyl-tRNA hydrolase, found in Acidiphilium cryptum (strain JF-5).